The chain runs to 369 residues: Glycine oxidase (369 aa).

FAD contacts are provided by residues 14-15, 34-35, 42-43, 47-49, and Val-174; these read II, ES, TT, and AGM. Positions 302 and 329 each coordinate substrate. Position 327-333 (327-333) interacts with FAD; that stretch reads HFRNGIL.

It belongs to the DAO family. ThiO subfamily. In terms of assembly, homotetramer. It depends on FAD as a cofactor.

The protein localises to the cytoplasm. It catalyses the reaction glycine + O2 + H2O = glyoxylate + H2O2 + NH4(+). It carries out the reaction N-ethylglycine + O2 + H2O = ethylamine + glyoxylate + H2O2. The enzyme catalyses sarcosine + O2 + H2O = methylamine + glyoxylate + H2O2. The catalysed reaction is D-alanine + O2 + H2O = pyruvate + H2O2 + NH4(+). It catalyses the reaction glyphosate + O2 + H2O = aminomethylphosphonate + glyoxylate + H2O2 + H(+). The protein operates within cofactor biosynthesis; thiamine diphosphate biosynthesis. With respect to regulation, is competitively inhibited by glycolate. Functionally, catalyzes the FAD-dependent oxidative deamination of various amines and D-amino acids to yield the corresponding alpha-keto acids, ammonia/amine, and hydrogen peroxide. Oxidizes sarcosine (N-methylglycine), N-ethylglycine and glycine. Can also oxidize the herbicide glyphosate (N-phosphonomethylglycine). Displays lower activities on D-alanine, D-valine, D-proline and D-methionine. Does not act on L-amino acids and other D-amino acids. Is essential for thiamine biosynthesis since the oxidation of glycine catalyzed by ThiO generates the glycine imine intermediate (dehydroglycine) required for the biosynthesis of the thiazole ring of thiamine pyrophosphate. The sequence is that of Glycine oxidase from Bacillus subtilis (strain 168).